The following is a 329-amino-acid chain: NADH-quinone oxidoreductase subunit H (329 aa).

The next 9 membrane-spanning stretches (helical) occupy residues leucine 9–isoleucine 29, glycine 42–phenylalanine 62, phenylalanine 75–isoleucine 95, isoleucine 117–glycine 137, isoleucine 154–valine 174, glycine 188–alanine 208, leucine 238–isoleucine 258, tryptophan 269–tryptophan 291, and tryptophan 309–isoleucine 329.

Belongs to the complex I subunit 1 family. NDH-1 is composed of 14 different subunits. Subunits NuoA, H, J, K, L, M, N constitute the membrane sector of the complex.

It is found in the cell inner membrane. The catalysed reaction is a quinone + NADH + 5 H(+)(in) = a quinol + NAD(+) + 4 H(+)(out). Functionally, NDH-1 shuttles electrons from NADH, via FMN and iron-sulfur (Fe-S) centers, to quinones in the respiratory chain. The immediate electron acceptor for the enzyme in this species is believed to be ubiquinone. Couples the redox reaction to proton translocation (for every two electrons transferred, four hydrogen ions are translocated across the cytoplasmic membrane), and thus conserves the redox energy in a proton gradient. This subunit may bind ubiquinone. The protein is NADH-quinone oxidoreductase subunit H of Helicobacter pylori (strain J99 / ATCC 700824) (Campylobacter pylori J99).